The sequence spans 325 residues: NADH-quinone oxidoreductase subunit H (325 aa).

Helical transmembrane passes span 11 to 31 (ILLS…CGAF), 50 to 69 (NRVG…KMFF), 81 to 101 (VIFT…FAIV), 114 to 134 (IGIL…LFAG), 154 to 174 (LSYE…AGSF), 186 to 206 (IWNV…GVAV), 237 to 257 (FFVG…TLFF), 265 to 285 (LPPF…FILI), and 304 to 324 (VCLP…LWQA).

This sequence belongs to the complex I subunit 1 family. NDH-1 is composed of 13 different subunits. Subunits NuoA, H, J, K, L, M, N constitute the membrane sector of the complex.

The protein resides in the cell inner membrane. It catalyses the reaction a quinone + NADH + 5 H(+)(in) = a quinol + NAD(+) + 4 H(+)(out). In terms of biological role, NDH-1 shuttles electrons from NADH, via FMN and iron-sulfur (Fe-S) centers, to quinones in the respiratory chain. The immediate electron acceptor for the enzyme in this species is believed to be ubiquinone. Couples the redox reaction to proton translocation (for every two electrons transferred, four hydrogen ions are translocated across the cytoplasmic membrane), and thus conserves the redox energy in a proton gradient. This subunit may bind ubiquinone. The chain is NADH-quinone oxidoreductase subunit H from Citrobacter koseri (strain ATCC BAA-895 / CDC 4225-83 / SGSC4696).